A 509-amino-acid chain; its full sequence is ATP synthase subunit alpha (509 aa).

Residue 169–176 participates in ATP binding; the sequence is GDRQTGKT.

The protein belongs to the ATPase alpha/beta chains family. In terms of assembly, F-type ATPases have 2 components, CF(1) - the catalytic core - and CF(0) - the membrane proton channel. CF(1) has five subunits: alpha(3), beta(3), gamma(1), delta(1), epsilon(1). CF(0) has three main subunits: a(1), b(2) and c(9-12). The alpha and beta chains form an alternating ring which encloses part of the gamma chain. CF(1) is attached to CF(0) by a central stalk formed by the gamma and epsilon chains, while a peripheral stalk is formed by the delta and b chains.

It is found in the cell inner membrane. The catalysed reaction is ATP + H2O + 4 H(+)(in) = ADP + phosphate + 5 H(+)(out). Produces ATP from ADP in the presence of a proton gradient across the membrane. The alpha chain is a regulatory subunit. The protein is ATP synthase subunit alpha of Parvibaculum lavamentivorans (strain DS-1 / DSM 13023 / NCIMB 13966).